Consider the following 355-residue polypeptide: Poly(3-hydroxyalkanoate) polymerase subunit PhaC (355 aa).

The region spanning 68 to 333 (PLLIVYALVN…LAFPGGHIGI (266 aa)) is the AB hydrolase-1 domain. Residue C148 is part of the active site.

This sequence belongs to the PHA/PHB synthase family. Type III PhaC subfamily. Forms a heterodimer with PhaE, which may multimerize in the presence of 3-hydroxybutyryl-CoA.

The protein localises to the cytoplasm. It catalyses the reaction (3R)-3-hydroxybutanoyl-CoA + [(3R)-hydroxybutanoate](n) = [(3R)-hydroxybutanoate](n+1) + CoA. It participates in biopolymer metabolism; poly-(R)-3-hydroxybutanoate biosynthesis. Polymerizes D(-)-3-hydroxybutyryl-CoA to create PHB which consists of thousands of hydroxybutyrate molecules linked end to end. PHB serves as an intracellular energy reserve material when cells grow under conditions of nutrient limitation. The protein is Poly(3-hydroxyalkanoate) polymerase subunit PhaC of Thiocystis violacea.